A 380-amino-acid chain; its full sequence is Cytochrome b (380 aa).

4 consecutive transmembrane segments (helical) span residues 34-54 (FGSL…FLAM), 78-99 (WLVR…YLHI), 114-134 (WNIG…GYVL), and 179-199 (FFAF…LHLL). 2 residues coordinate heme b: His84 and His98. Residues His183 and His197 each contribute to the heme b site. His202 lines the a ubiquinone pocket. Transmembrane regions (helical) follow at residues 227–247 (YKDT…SMLS), 289–309 (LGGV…PMIH), 321–341 (MTQF…WIGG), and 348–368 (FIEI…IFMP).

It belongs to the cytochrome b family. In terms of assembly, the cytochrome bc1 complex contains 3 respiratory subunits (MT-CYB, CYC1 and UQCRFS1), 2 core proteins (UQCRC1 and UQCRC2) and probably 6 low-molecular weight proteins. Requires heme b as cofactor.

The protein resides in the mitochondrion inner membrane. Functionally, component of the ubiquinol-cytochrome c reductase complex (complex III or cytochrome b-c1 complex) that is part of the mitochondrial respiratory chain. The b-c1 complex mediates electron transfer from ubiquinol to cytochrome c. Contributes to the generation of a proton gradient across the mitochondrial membrane that is then used for ATP synthesis. The chain is Cytochrome b (mt-cyb) from Ranodon sibiricus (Siberian salamander).